We begin with the raw amino-acid sequence, 65 residues long: MAQEQKQPRKSSEADEAVEAVAETDVSERKEALDSDVDDILDEIDDVLETNAEDFVKSFIQKGGE.

Positions 1 to 13 (MAQEQKQPRKSSE) are enriched in basic and acidic residues. Residues 1 to 34 (MAQEQKQPRKSSEADEAVEAVAETDVSERKEALD) are disordered. The ARC ATPase binding stretch occupies residues 21–59 (VAETDVSERKEALDSDVDDILDEIDDVLETNAEDFVKSF). Residues 25-49 (DVSERKEALDSDVDDILDEIDDVLE) adopt a coiled-coil conformation. An Isoglutamyl lysine isopeptide (Glu-Lys) (interchain with K-? in acceptor proteins) cross-link involves residue E65.

Belongs to the prokaryotic ubiquitin-like protein family. As to quaternary structure, strongly interacts with the proteasome-associated ATPase ARC through a hydrophobic interface; the interacting region of Pup lies in its C-terminal half. There is one Pup binding site per ARC hexamer ring.

It functions in the pathway protein degradation; proteasomal Pup-dependent pathway. Functionally, protein modifier that is covalently attached to lysine residues of substrate proteins, thereby targeting them for proteasomal degradation. The tagging system is termed pupylation. The chain is Prokaryotic ubiquitin-like protein Pup from Nocardioides sp. (strain ATCC BAA-499 / JS614).